The sequence spans 503 residues: Catalase (503 aa).

The disordered stretch occupies residues 1–26; it reads MAKDDKRLTGLFGHPVSDRENSMTAG. Catalysis depends on residues His-56 and Asn-129. Tyr-339 serves as a coordination point for heme.

Belongs to the catalase family. As to quaternary structure, homodimer. Heme serves as cofactor.

It catalyses the reaction 2 H2O2 = O2 + 2 H2O. Its function is as follows. Decomposes hydrogen peroxide into water and oxygen; serves to protect cells from the toxic effects of hydrogen peroxide. The chain is Catalase (katA) from Staphylococcus haemolyticus (strain JCSC1435).